Here is a 250-residue protein sequence, read N- to C-terminus: Hydroxyacylglutathione hydrolase (250 aa).

Zn(2+) is bound by residues H52, H54, D56, H57, H107, D128, and H166.

Belongs to the metallo-beta-lactamase superfamily. Glyoxalase II family. As to quaternary structure, monomer. It depends on Zn(2+) as a cofactor.

The catalysed reaction is an S-(2-hydroxyacyl)glutathione + H2O = a 2-hydroxy carboxylate + glutathione + H(+). The protein operates within secondary metabolite metabolism; methylglyoxal degradation; (R)-lactate from methylglyoxal: step 2/2. In terms of biological role, thiolesterase that catalyzes the hydrolysis of S-D-lactoyl-glutathione to form glutathione and D-lactic acid. This is Hydroxyacylglutathione hydrolase from Neisseria gonorrhoeae (strain NCCP11945).